Reading from the N-terminus, the 301-residue chain is Nodulation protein D 3 (301 aa).

The HTH lysR-type domain maps to 6-63; sequence LDLNLLVVLDALLTARNLTAAASSINLSQPAMSAAVARLRNYFNDELFTMSGRERVLT. The H-T-H motif DNA-binding region spans 23-43; the sequence is LTAAASSINLSQPAMSAAVAR.

It belongs to the LysR transcriptional regulatory family.

NodD regulates the expression of the nodABCFE genes which encode other nodulation proteins. NodD is also a negative regulator of its own expression. Binds flavonoids as inducers. This Mesorhizobium japonicum (strain LMG 29417 / CECT 9101 / MAFF 303099) (Mesorhizobium loti (strain MAFF 303099)) protein is Nodulation protein D 3 (nodD3).